The chain runs to 342 residues: Maltose regulon regulatory protein MalI (342 aa).

One can recognise an HTH lacI-type domain in the interval 7 to 61 (ITIHDVALAAGVSVSTVSLVLSGKGRISTATGERVNAAIEELGFVRNRQASALRG). Positions 9-28 (IHDVALAAGVSVSTVSLVLS) form a DNA-binding region, H-T-H motif.

Functionally, repressor for the malX and malY genes. Also regulates its own expression. Binds maltose as an inducer. The sequence is that of Maltose regulon regulatory protein MalI (malI) from Escherichia coli (strain K12).